The sequence spans 328 residues: Cytochrome f (328 aa).

The signal sequence occupies residues 1–44; that stretch reads MRNPDTLGLWTKTMVALRRFTVLAIATVSVFLITDLGLPQAASA. Heme contacts are provided by Y45, C66, C69, and H70. Residues 296 to 313 form a helical membrane-spanning segment; the sequence is FLVLFLAGIMLSQILLVL.

It belongs to the cytochrome f family. The 4 large subunits of the cytochrome b6-f complex are cytochrome b6, subunit IV (17 kDa polypeptide, PetD), cytochrome f and the Rieske protein, while the 4 small subunits are PetG, PetL, PetM and PetN. The complex functions as a dimer. Heme serves as cofactor.

The protein localises to the cellular thylakoid membrane. Its function is as follows. Component of the cytochrome b6-f complex, which mediates electron transfer between photosystem II (PSII) and photosystem I (PSI), cyclic electron flow around PSI, and state transitions. This chain is Cytochrome f (petA), found in Synechocystis sp. (strain ATCC 27184 / PCC 6803 / Kazusa).